A 257-amino-acid chain; its full sequence is TLC domain-containing protein 3A (257 aa).

7 consecutive transmembrane segments (helical) span residues 1–21 (MLLT…LCTW), 42–62 (LVSS…IRSC), 77–97 (VWFL…CEWC), 113–135 (FLSR…VPVA), 142–162 (LGDF…FVSL), 181–201 (GILT…FMYW), and 220–240 (FYCN…FCLL). In terms of domain architecture, TLC spans 33-249 (TDCVMISTRL…LCRKAVRLFD (217 aa)).

In terms of assembly, interacts with GGT7 isoform 3 and SLC3A2. As to expression, highly expressed in pancreas. Detected at intermediate levels in heart, placenta and kidney, and at low levels in brain, liver and skeletal muscle. Not detected in normal lung.

The protein resides in the cell membrane. The polypeptide is TLC domain-containing protein 3A (Homo sapiens (Human)).